Reading from the N-terminus, the 262-residue chain is Hydroxyethylthiazole kinase (262 aa).

Residue Met-50 participates in substrate binding. ATP is bound by residues Arg-125 and Thr-171. Residue Gly-198 participates in substrate binding.

This sequence belongs to the Thz kinase family. Requires Mg(2+) as cofactor.

It catalyses the reaction 5-(2-hydroxyethyl)-4-methylthiazole + ATP = 4-methyl-5-(2-phosphooxyethyl)-thiazole + ADP + H(+). It functions in the pathway cofactor biosynthesis; thiamine diphosphate biosynthesis; 4-methyl-5-(2-phosphoethyl)-thiazole from 5-(2-hydroxyethyl)-4-methylthiazole: step 1/1. Functionally, catalyzes the phosphorylation of the hydroxyl group of 4-methyl-5-beta-hydroxyethylthiazole (THZ). The sequence is that of Hydroxyethylthiazole kinase from Escherichia coli O17:K52:H18 (strain UMN026 / ExPEC).